We begin with the raw amino-acid sequence, 336 residues long: MVNIAINGFGRIGRNVLRALYESGRNNEFNVVAINDIAKPEGIAHLLKYDTAHGRFRFDVALENNTLNVAGDDIALLAISDIKELPWRDLGVDIVLECTGKFDDRASGQAHLDAGAGKVLFSSPGSPDLDNTVIFGTNEDTLTSEQKLVSNGSCTTNCIVPVIQALDAAFGVESGTITTIHASMHDQQVIDAYHEDLRRTRAASQSIIPVDTRLAAGIERILPKFAGKFEAIAVRVPTINVTAMDLSVTLQSKVTIEQVNQALRSAKAGRLQGILDYTEEPLVSVDFNHDPHSCIVDGTQTRVSHKQLVKTLVWCDNEWGFANRMLDTAKVMFDAK.

An NAD(+)-binding site is contributed by 11–12 (RI). Substrate is bound by residues 153–155 (SCT), Arg199, 212–213 (TR), and Arg235. Cys154 (nucleophile) is an active-site residue. Asn317 lines the NAD(+) pocket.

Belongs to the glyceraldehyde-3-phosphate dehydrogenase family. Epd subfamily. As to quaternary structure, homotetramer.

Its subcellular location is the cytoplasm. The catalysed reaction is D-erythrose 4-phosphate + NAD(+) + H2O = 4-phospho-D-erythronate + NADH + 2 H(+). The protein operates within cofactor biosynthesis; pyridoxine 5'-phosphate biosynthesis; pyridoxine 5'-phosphate from D-erythrose 4-phosphate: step 1/5. Functionally, catalyzes the NAD-dependent conversion of D-erythrose 4-phosphate to 4-phosphoerythronate. This is D-erythrose-4-phosphate dehydrogenase from Alteromonas mediterranea (strain DSM 17117 / CIP 110805 / LMG 28347 / Deep ecotype).